Consider the following 297-residue polypeptide: tRNA pseudouridine synthase A (297 aa).

Asp-57 serves as the catalytic Nucleophile. Tyr-115 is a binding site for substrate.

This sequence belongs to the tRNA pseudouridine synthase TruA family. As to quaternary structure, homodimer.

The catalysed reaction is uridine(38/39/40) in tRNA = pseudouridine(38/39/40) in tRNA. Formation of pseudouridine at positions 38, 39 and 40 in the anticodon stem and loop of transfer RNAs. This chain is tRNA pseudouridine synthase A, found in Nitratidesulfovibrio vulgaris (strain ATCC 29579 / DSM 644 / CCUG 34227 / NCIMB 8303 / VKM B-1760 / Hildenborough) (Desulfovibrio vulgaris).